The following is a 243-amino-acid chain: UDP-2,3-diacylglucosamine hydrolase (243 aa).

Residues Asp8, His10, Asp41, Asn79, and His114 each contribute to the Mn(2+) site. 79–80 (NR) contacts substrate. Substrate contacts are provided by Asp122, Lys164, Lys167, and His195. His195 and His197 together coordinate Mn(2+).

The protein belongs to the LpxH family. The cofactor is Mn(2+).

Its subcellular location is the cell inner membrane. The catalysed reaction is UDP-2-N,3-O-bis[(3R)-3-hydroxytetradecanoyl]-alpha-D-glucosamine + H2O = 2-N,3-O-bis[(3R)-3-hydroxytetradecanoyl]-alpha-D-glucosaminyl 1-phosphate + UMP + 2 H(+). Its pathway is glycolipid biosynthesis; lipid IV(A) biosynthesis; lipid IV(A) from (3R)-3-hydroxytetradecanoyl-[acyl-carrier-protein] and UDP-N-acetyl-alpha-D-glucosamine: step 4/6. In terms of biological role, hydrolyzes the pyrophosphate bond of UDP-2,3-diacylglucosamine to yield 2,3-diacylglucosamine 1-phosphate (lipid X) and UMP by catalyzing the attack of water at the alpha-P atom. Involved in the biosynthesis of lipid A, a phosphorylated glycolipid that anchors the lipopolysaccharide to the outer membrane of the cell. This Vibrio vulnificus (strain CMCP6) protein is UDP-2,3-diacylglucosamine hydrolase.